The following is a 99-amino-acid chain: Acylphosphatase-1 (99 aa).

Residue A2 is modified to N-acetylalanine. An Acylphosphatase-like domain is found at 9–99 (SVDYEIFGKV…LDYSDFQIVK (91 aa)). Residues R24 and N42 contribute to the active site.

This sequence belongs to the acylphosphatase family.

The catalysed reaction is an acyl phosphate + H2O = a carboxylate + phosphate + H(+). This is Acylphosphatase-1 (Acyp1) from Mus musculus (Mouse).